We begin with the raw amino-acid sequence, 165 residues long: Transcription elongation factor A protein-like 1 (165 aa).

Disordered regions lie at residues 1–66 (MENS…LLPE) and 89–124 (IPME…GDIH). A compositionally biased stretch (acidic residues) spans 33-60 (CSEDDQSSEDLSSEEQSSDEEFFPEELL). The segment covering 101–124 (HKLEEGSFKERLARSRPQFRGDIH) has biased composition (basic and acidic residues).

Belongs to the TFS-II family. TFA subfamily.

Its subcellular location is the nucleus. Functionally, may be involved in transcriptional regulation. Modulates various viral and cellular promoters in a promoter context-dependent manner. Does not bind DNA directly. The chain is Transcription elongation factor A protein-like 1 from Rattus norvegicus (Rat).